Here is a 279-residue protein sequence, read N- to C-terminus: UPF0173 metal-dependent hydrolase MXAN_1394 (279 aa).

This sequence belongs to the UPF0173 family.

This Myxococcus xanthus (strain DK1622) protein is UPF0173 metal-dependent hydrolase MXAN_1394.